The sequence spans 140 residues: Small ribosomal subunit protein uS19 (140 aa).

This sequence belongs to the universal ribosomal protein uS19 family.

In terms of biological role, protein S19 forms a complex with S13 that binds strongly to the 16S ribosomal RNA. The protein is Small ribosomal subunit protein uS19 of Methanocella arvoryzae (strain DSM 22066 / NBRC 105507 / MRE50).